The primary structure comprises 164 residues: Peptidyl-prolyl cis-trans isomerase A-like 4H (164 aa).

The 157-residue stretch at Phe-7 to Gln-163 folds into the PPIase cyclophilin-type domain. N-linked (GlcNAc...) asparagine glycosylation is found at Asn-71 and Asn-108.

The protein belongs to the cyclophilin-type PPIase family. PPIase A subfamily.

The protein resides in the cytoplasm. It carries out the reaction [protein]-peptidylproline (omega=180) = [protein]-peptidylproline (omega=0). Functionally, PPIases accelerate the folding of proteins. It catalyzes the cis-trans isomerization of proline imidic peptide bonds in oligopeptides. In Homo sapiens (Human), this protein is Peptidyl-prolyl cis-trans isomerase A-like 4H.